Here is a 62-residue protein sequence, read N- to C-terminus: Small ribosomal subunit protein eS27 (62 aa).

Zn(2+)-binding residues include C17, C20, C36, and C39. The C4-type zinc-finger motif lies at 17–39; sequence CPDCENEQIIFEKASTVVDCVVC.

This sequence belongs to the eukaryotic ribosomal protein eS27 family. As to quaternary structure, part of the 30S ribosomal subunit. Requires Zn(2+) as cofactor.

The protein is Small ribosomal subunit protein eS27 of Methanosphaerula palustris (strain ATCC BAA-1556 / DSM 19958 / E1-9c).